A 138-amino-acid chain; its full sequence is UPF0310 protein MAV_1800 (138 aa).

The protein belongs to the UPF0310 family.

This is UPF0310 protein MAV_1800 from Mycobacterium avium (strain 104).